The primary structure comprises 162 residues: Novel acetylcholine receptor chaperone (162 aa).

Over 1–5 (MASPR) the chain is Cytoplasmic. Residues 6–26 (TVTIVALSVTLGLFFVFMGTI) traverse the membrane as a helical segment. Residues 27 to 61 (KLTPRLSKDAYSEMKRAYKSYVKALPALKKIGISS) lie on the Lumenal side of the membrane. Residues 62 to 82 (VFLRKAIGSLELACGIVLTLV) form a helical membrane-spanning segment. The Cytoplasmic segment spans residues 83-88 (PGRPKD). A helical transmembrane segment spans residues 89 to 109 (VANFILLLLVLIVLFFHQLVG). The Lumenal portion of the chain corresponds to 110–114 (DPLKR). The helical transmembrane segment at 115–131 (YAHALVFGILLTCRLLV) threads the bilayer. At 132 to 162 (SRQPEEEFPEKKLSRGNNGAHSREPIKMKVS) the chain is on the cytoplasmic side. The tract at residues 141–162 (EKKLSRGNNGAHSREPIKMKVS) is disordered. The span at 152-162 (HSREPIKMKVS) shows a compositional bias: basic and acidic residues.

It belongs to the DoxX family.

The protein localises to the peroxisome membrane. It localises to the cytoplasmic vesicle. Its subcellular location is the endoplasmic reticulum membrane. In terms of biological role, molecular chaperone which mediates the proper assembly and functional expression of the nicotinic acetylcholine receptors (nAChRs) throughout the brain. Essential for the proper folding, assembly, function and surface trafficking of alpha-7 (CHRNA7), alpha-4-beta-2, alpha-3-beta-2 and alpha-3-beta-4 receptors. This Xenopus tropicalis (Western clawed frog) protein is Novel acetylcholine receptor chaperone (tmem35a).